Reading from the N-terminus, the 147-residue chain is Small ribosomal subunit protein uS12 (147 aa).

The protein belongs to the universal ribosomal protein uS12 family. Part of the 30S ribosomal subunit.

Its function is as follows. With S4 and S5 plays an important role in translational accuracy. Located at the interface of the 30S and 50S subunits. This is Small ribosomal subunit protein uS12 from Sulfurisphaera tokodaii (strain DSM 16993 / JCM 10545 / NBRC 100140 / 7) (Sulfolobus tokodaii).